The primary structure comprises 225 residues: Ribulose-phosphate 3-epimerase (225 aa).

Residue Ser-9 coordinates substrate. 3 residues coordinate a divalent metal cation: His-34, Asp-36, and His-68. Catalysis depends on Asp-36, which acts as the Proton acceptor. Substrate is bound by residues His-68, 144–147 (GFGG), 177–179 (DGG), and 199–200 (GS). Asp-177 is an a divalent metal cation binding site. The active-site Proton donor is the Asp-177.

It belongs to the ribulose-phosphate 3-epimerase family. It depends on a divalent metal cation as a cofactor.

The enzyme catalyses D-ribulose 5-phosphate = D-xylulose 5-phosphate. It functions in the pathway carbohydrate degradation. In terms of biological role, catalyzes the reversible epimerization of D-ribulose 5-phosphate to D-xylulose 5-phosphate. The protein is Ribulose-phosphate 3-epimerase of Escherichia coli O157:H7.